Consider the following 229-residue polypeptide: Potassium/proton antiporter CemA (229 aa).

4 helical membrane passes run 7–27 (LASL…SLSF), 106–126 (IILH…YFFL), 154–174 (ILLV…ELMI), and 189–209 (IISG…KYWI).

This sequence belongs to the CemA family.

The protein localises to the plastid. The protein resides in the chloroplast inner membrane. The catalysed reaction is K(+)(in) + H(+)(out) = K(+)(out) + H(+)(in). Contributes to K(+)/H(+) antiport activity by supporting proton efflux to control proton extrusion and homeostasis in chloroplasts in a light-dependent manner to modulate photosynthesis. Prevents excessive induction of non-photochemical quenching (NPQ) under continuous-light conditions. Indirectly promotes efficient inorganic carbon uptake into chloroplasts. The protein is Potassium/proton antiporter CemA of Phalaenopsis aphrodite subsp. formosana (Moth orchid).